The chain runs to 890 residues: MTAPLTTAEIRERYLYFFETKGHLRLPSHSTIAPDPTTLFTVAGMQPFKENFMGAPAVFDGQPSKRVTTAQKCVRVGDIENVGRTRRHLSLFEMMGNFSFGDYFKRDAIHWAWEFLTGPEWMGMDKDKMYVTVYKDDDEAFGYWTQDIGLPAEHIHRFDADENFWPANAPLEGPNGPCGPCSEIYYDRGENYGDDTWGDYYQTRESARFLEVWNLVFPQYDRQDLDASGQPVLKDLPFKNIDTGMGLERVASVVQDVPDFYSNDVFKPIVERVAELSGKPYEGETSVSHRVVAEHIRSVSMIVADGTAFSNTGRGYTARKIMRRAIRHGYMLGLREPQLYRLVELVVDSMGGAYPELQHNQSRVEASVRAEEEQFLKTLEGGIKRLGGLLSGMEKGSTLVGKDAFELYDTYGFPVDLTKEIAEEYGVSVDEAGYAESLEHAQEIARAGSKYGKSELFGGHQEALDGLPATQFVGYDQTSGDGQVLALLSGGERLSHLPAGSEATVVLSQTPFYGEGGGEVGDTGRLEWDGGAGIVRDTQKTKQGVFLHDVLVEQGELKEGTRVRGVVSPERAAIQRHHTATHLLHAALRAVLGGGVQQKGSRVAADQLRFDFSHGAAMSAEEIAQVETLVSRWVSANFPVSWREMPIAEAKAAGATALFGEKYGDVVRVVRVEGDVDFGGHAVSSMELCGGAHVSRTGDIGAFVIVSDENVAAGVRRIEALAGEQATAWLRGRLNASAKAAALLNTSPEGLEERVSGLQGQLKAAEKETAQARRQLAEAQMGGGGSAAQTRELGGFKVASLKLSGIEGNELRGAADKLLDQSGADLVVIASDKGLVVKATKDAVAKGAHAGQLVSKLAAAGGGKGGGRPDMAQAGITDAAGALGALDTAF.

4 residues coordinate Zn(2+): histidine 578, histidine 582, cysteine 689, and histidine 693.

The protein belongs to the class-II aminoacyl-tRNA synthetase family. The cofactor is Zn(2+).

The protein localises to the cytoplasm. The enzyme catalyses tRNA(Ala) + L-alanine + ATP = L-alanyl-tRNA(Ala) + AMP + diphosphate. Its function is as follows. Catalyzes the attachment of alanine to tRNA(Ala) in a two-step reaction: alanine is first activated by ATP to form Ala-AMP and then transferred to the acceptor end of tRNA(Ala). Also edits incorrectly charged Ser-tRNA(Ala) and Gly-tRNA(Ala) via its editing domain. In Deinococcus radiodurans (strain ATCC 13939 / DSM 20539 / JCM 16871 / CCUG 27074 / LMG 4051 / NBRC 15346 / NCIMB 9279 / VKM B-1422 / R1), this protein is Alanine--tRNA ligase.